The chain runs to 189 residues: Ribonuclease M5 (189 aa).

Residues 8–91 form the Toprim domain; that stretch reads KEIIVVEGKD…AFLPKEEALA (84 aa). Mg(2+) contacts are provided by E14, D60, and D62.

The protein belongs to the ribonuclease M5 family. It depends on Mg(2+) as a cofactor.

The protein localises to the cytoplasm. It catalyses the reaction Endonucleolytic cleavage of RNA, removing 21 and 42 nucleotides, respectively, from the 5'- and 3'-termini of a 5S-rRNA precursor.. Functionally, required for correct processing of both the 5' and 3' ends of 5S rRNA precursor. Cleaves both sides of a double-stranded region yielding mature 5S rRNA in one step. The chain is Ribonuclease M5 from Bacillus cereus (strain ATCC 14579 / DSM 31 / CCUG 7414 / JCM 2152 / NBRC 15305 / NCIMB 9373 / NCTC 2599 / NRRL B-3711).